A 361-amino-acid polypeptide reads, in one-letter code: Cdc42 effector protein 1 (361 aa).

The tract at residues 1–29 (MPGPQGAGGAPAMNLGKLSPVGWVSSSQG) is disordered. Ser-19 and Ser-27 each carry phosphoserine. A Phosphothreonine modification is found at Thr-34. The CRIB domain occupies 38–52 (ISPPLGDFRHTMHVG). Ser-39 is subject to Phosphoserine. Omega-N-methylarginine is present on Arg-53. Residues Ser-65, Ser-73, Ser-77, Ser-101, Ser-113, Ser-121, Ser-139, Ser-180, Ser-190, Ser-192, and Ser-195 each carry the phosphoserine modification. A disordered region spans residues 161–186 (CTISRLPRPEKPRDRDRDSSFPAEPE). The span at 167-186 (PRPEKPRDRDRDSSFPAEPE) shows a compositional bias: basic and acidic residues. 2 disordered regions span residues 218 to 300 (EGSA…SRHH) and 320 to 361 (SWGS…EVKV). Tandem repeats lie at residues 220 to 226 (SAAETPA), 229 to 235 (PAASPPA), 236 to 242 (SVANPPA), and 243 to 249 (PASSPSL). The 4 X 7 AA tandem repeats of [PT]-[AT]-A-[ENT]-[PT]-[PTS]-[AG] stretch occupies residues 220-249 (SAAETPAPAPAASPPASVANPPAPASSPSL). Phosphoserine is present on residues Ser-270, Ser-320, and Ser-323. The span at 332–347 (QAGSRTPVPSTVQANT) shows a compositional bias: polar residues. Over residues 351–361 (ADAEEDDEVKV) the composition is skewed to acidic residues.

This sequence belongs to the BORG/CEP family. In terms of assembly, interacts with RHOQ and CDC42, in a GTP-dependent manner.

Its subcellular location is the endomembrane system. The protein resides in the cytoplasm. It localises to the cytoskeleton. Functionally, probably involved in the organization of the actin cytoskeleton. Induced membrane extensions in fibroblasts. The protein is Cdc42 effector protein 1 of Bos taurus (Bovine).